We begin with the raw amino-acid sequence, 520 residues long: Nonsense-mediated mRNA decay factor SMG9 (520 aa).

The segment at 1-143 (MSESGHSQPG…KGEKEGQRPT (143 aa)) is disordered. Serine 2 carries the post-translational modification N-acetylserine. Residues serine 2, serine 4, serine 7, serine 32, and serine 53 each carry the phosphoserine modification. The span at 36 to 53 (GRERDYIAPWERERRDGS) shows a compositional bias: basic and acidic residues. 2 stretches are compositionally biased toward pro residues: residues 78 to 94 (QPPP…PAPL) and 122 to 133 (TAPPPPTAPAPP). Serine 451 carries the phosphoserine modification.

This sequence belongs to the SMG9 family. Self-associates to form homodimers and forms heterodimers with SMG8; these assembly forms may represent SMG1C intermediate forms. Component of the SMG1C complex composed of SMG1, SMG8 and SMG9. Interacts with DHX34; the interaction is RNA-independent. Phosphorylated by SMG1.

Involved in nonsense-mediated decay (NMD) of mRNAs containing premature stop codons. Is recruited by release factors to stalled ribosomes together with SMG1 and SMG8 (forming the SMG1C protein kinase complex) and, in the SMG1C complex, is required for the efficient association between SMG1 and SMG8. Plays a role in brain, heart, and eye development. This chain is Nonsense-mediated mRNA decay factor SMG9, found in Mus musculus (Mouse).